The chain runs to 53 residues: Large ribosomal subunit protein eL40 (53 aa).

Belongs to the eukaryotic ribosomal protein eL40 family.

The chain is Large ribosomal subunit protein eL40 from Staphylothermus marinus (strain ATCC 43588 / DSM 3639 / JCM 9404 / F1).